The primary structure comprises 99 residues: NADH dehydrogenase [ubiquinone] 1 alpha subcomplex subunit 2 (99 aa).

N-acetylalanine is present on alanine 2. A disulfide bridge links cysteine 24 with cysteine 58. Lysine 64 is subject to N6-acetyllysine; alternate. At lysine 64 the chain carries N6-succinyllysine; alternate.

This sequence belongs to the complex I NDUFA2 subunit family. As to quaternary structure, complex I is composed of 45 different subunits.

Its subcellular location is the mitochondrion inner membrane. Accessory subunit of the mitochondrial membrane respiratory chain NADH dehydrogenase (Complex I), that is believed not to be involved in catalysis. Complex I functions in the transfer of electrons from NADH to the respiratory chain. The immediate electron acceptor for the enzyme is believed to be ubiquinone. This chain is NADH dehydrogenase [ubiquinone] 1 alpha subcomplex subunit 2 (NDUFA2), found in Gorilla gorilla gorilla (Western lowland gorilla).